We begin with the raw amino-acid sequence, 85 residues long: MRVLFLYGLCVRFLYFCLVLYFSPRLPSSGNRRCLYAICYMFNILWFFCVFCCVCFLNHLLFIVEGGGFIDLPGVKYFSRFFLNA.

Belongs to the universal ribosomal protein uS12 family.

Its subcellular location is the mitochondrion matrix. It localises to the kinetoplast. Functionally, protein S12 is involved in the translation initiation step. The protein is Small ribosomal subunit protein uS12m (RPS12) of Leishmania tarentolae (Sauroleishmania tarentolae).